Reading from the N-terminus, the 358-residue chain is DnaJ homolog subfamily C member 18 (358 aa).

The 65-residue stretch at 82-146 (NYYEILGVSR…DKRLRYDEYG (65 aa)) folds into the J domain. A helical membrane pass occupies residues 228–248 (AFIQLLPVLVIVIISVITQLL).

It is found in the endoplasmic reticulum membrane. In terms of biological role, (Microbial infection) In case of infection by polyomavirus, involved in the virus endoplasmic reticulum membrane penetration and infection. Regulates the recruitment of DNAJB12:DNAJB14 into SV40-induced foci and all cooperate to guide SV40 across the endoplasmic reticulum membrane. The foci represent the site from which SV40 penetrates into the cytosol. This Homo sapiens (Human) protein is DnaJ homolog subfamily C member 18.